The following is a 419-amino-acid chain: MDKLAIQASPPLAGDVIISGAKNAALPILMAGVLAETDFIVSNVPNLRDVSTSCKLLRCLGADVDELGNGQIRISTKNLNEFCAPYDLVKTMRASILILGPLLARYGTADVSLPGGCAIGARPVNLHLHGLEMMGAKIEVKEGYIKARVDGRLKGAHIFMDMVSVGATENLLMAAALADGETVIENAAREPEVIDLANCLIAMGAKITGVGSATLRIQGVERLQGCEYRVMPDRIETGSFLVAAAVTRGRIRCLKADPASLESVIAKLEDAGAKITTGEDWIELDMEGKRPKAVNIKTAPYPGFPTDMQAQFCVLNVLAQGTATITETIFENRFMHVPELIRMGANMELEGNTCIIQGIESLSGAQVMATDLRASASLVIAGLVADGKTIVDRIYHLDRGYEHIEQKFQGLGAHVERVQ.

22–23 lines the phosphoenolpyruvate pocket; sequence KN. R93 contributes to the UDP-N-acetyl-alpha-D-glucosamine binding site. Catalysis depends on C117, which acts as the Proton donor. C117 carries the post-translational modification 2-(S-cysteinyl)pyruvic acid O-phosphothioketal. Positions 307 and 329 each coordinate UDP-N-acetyl-alpha-D-glucosamine.

Belongs to the EPSP synthase family. MurA subfamily.

The protein localises to the cytoplasm. It catalyses the reaction phosphoenolpyruvate + UDP-N-acetyl-alpha-D-glucosamine = UDP-N-acetyl-3-O-(1-carboxyvinyl)-alpha-D-glucosamine + phosphate. It functions in the pathway cell wall biogenesis; peptidoglycan biosynthesis. Its function is as follows. Cell wall formation. Adds enolpyruvyl to UDP-N-acetylglucosamine. The polypeptide is UDP-N-acetylglucosamine 1-carboxyvinyltransferase (Shewanella sp. (strain ANA-3)).